We begin with the raw amino-acid sequence, 728 residues long: Pre-mRNA-splicing ATP-dependent RNA helicase prp-28 (728 aa).

The tract at residues 19-155 is disordered; sequence KKEEEAAAAK…NDEAELRARY (137 aa). Composition is skewed to basic and acidic residues over residues 33–59, 109–125, and 137–153; these read PKKERERLEAEKKAKEEEERKRKEEAK, RDYRDNRDNRDNRDRNQ, and EEKRAKMERNDEAELRA. Residues 293 to 321 carry the Q motif motif; the sequence is RSWEESTLPRRLLDIVKNVGYDEPTPIQR. Residues 324 to 527 form the Helicase ATP-binding domain; that stretch reads IPIALQARDL…KKYLRRPAIV (204 aa). 337–344 is an ATP binding site; the sequence is AVTGSGKT. A DEAD box motif is present at residues 450–453; sequence DEAD. The 164-residue stretch at 538–701 folds into the Helicase C-terminal domain; the sequence is TVEQRVEFVS…KVPDELRRHE (164 aa). The interval 692-728 is disordered; that stretch reads KVPDELRRHEAAQNKPQKGQKKLEESNGYSGKGGSWN. A compositionally biased stretch (basic and acidic residues) spans 693–703; sequence VPDELRRHEAA.

This sequence belongs to the DEAD box helicase family. DDX23/PRP28 subfamily. Component of the U5 snRNP complex.

Its subcellular location is the cytoplasm. It localises to the nucleus. It carries out the reaction ATP + H2O = ADP + phosphate + H(+). Its function is as follows. ATP-dependent RNA helicase involved in mRNA splicing. May destabilize the U1/5'-splice site duplex to permit an effective competition for the 5'-splice site by the U6 snRNA, resulting in the switch between U1 and U6 at the 5'-splice site. May also act to unwind the U4/U6 base-pairing interaction in the U4/U6/U5 snRNP, facilitating the first covalent step of splicing. This Neurospora crassa (strain ATCC 24698 / 74-OR23-1A / CBS 708.71 / DSM 1257 / FGSC 987) protein is Pre-mRNA-splicing ATP-dependent RNA helicase prp-28 (prp-28).